The primary structure comprises 141 residues: Secreted RxLR effector protein 69 (141 aa).

An N-terminal signal peptide occupies residues 1–19 (MHSSTILFVLGAAILAVNG). A RxLR-dEER motif is present at residues 38-53 (RLLRSNLMKHETGEER). N-linked (GlcNAc...) asparagine glycosylation occurs at Asn120.

The protein belongs to the RxLR effector family.

The protein resides in the secreted. It localises to the host nucleus. Secreted effector that completely suppresses the host cell death induced by cell death-inducing proteins. This chain is Secreted RxLR effector protein 69, found in Plasmopara viticola (Downy mildew of grapevine).